We begin with the raw amino-acid sequence, 318 residues long: Biotin synthase (318 aa).

In terms of domain architecture, Radical SAM core spans 44–273 (LCGNKFDLCT…TVQIRLAGGR (230 aa)). C62, C66, and C69 together coordinate [4Fe-4S] cluster. [2Fe-2S] cluster is bound by residues S106, C138, C198, and R268.

Belongs to the radical SAM superfamily. Biotin synthase family. In terms of assembly, homodimer. [4Fe-4S] cluster serves as cofactor. [2Fe-2S] cluster is required as a cofactor.

The enzyme catalyses (4R,5S)-dethiobiotin + (sulfur carrier)-SH + 2 reduced [2Fe-2S]-[ferredoxin] + 2 S-adenosyl-L-methionine = (sulfur carrier)-H + biotin + 2 5'-deoxyadenosine + 2 L-methionine + 2 oxidized [2Fe-2S]-[ferredoxin]. It participates in cofactor biosynthesis; biotin biosynthesis; biotin from 7,8-diaminononanoate: step 2/2. In terms of biological role, catalyzes the conversion of dethiobiotin (DTB) to biotin by the insertion of a sulfur atom into dethiobiotin via a radical-based mechanism. The sequence is that of Biotin synthase from Clostridium botulinum (strain Loch Maree / Type A3).